Here is a 207-residue protein sequence, read N- to C-terminus: Uridine kinase (207 aa).

13 to 20 is a binding site for ATP; that stretch reads GASGSGKT.

Belongs to the uridine kinase family.

Its subcellular location is the cytoplasm. The enzyme catalyses uridine + ATP = UMP + ADP + H(+). It catalyses the reaction cytidine + ATP = CMP + ADP + H(+). Its pathway is pyrimidine metabolism; CTP biosynthesis via salvage pathway; CTP from cytidine: step 1/3. It functions in the pathway pyrimidine metabolism; UMP biosynthesis via salvage pathway; UMP from uridine: step 1/1. This chain is Uridine kinase, found in Ureaplasma parvum serovar 3 (strain ATCC 27815 / 27 / NCTC 11736).